The primary structure comprises 430 residues: MLDPNLLRTEPDAVAEKLARRGFKLDVDKLRALEERRKVLQVQTENLQAERNSRSKSIGQAKARGEDIEPLRLEVNKLGEQLDAAKSELETLLAEIRDIALAIPNIPHDDVPVGRDENDNVEVSRWGTPRQFDFEVRDHVTLGEMHGGLDFAAAVKLTGSRFVVMKGQLARLHRALAQFMLDLHTEQHGYSENYVPYLVNQDTLYGTGQLPKFAGDLFHTRPLEEEADSSNYALIPTAEVPLTNLVRDEIIDEDDLPIKMTAHTPCFRSEAGSYGRDTRGLIRMHQFDKVEMVQIVRPEDSMVALEEMTGHAEKVLQLLGLPYRKVALCTGDMGFSACKTYDLEVWVPAQNTYREISSCSNVWDFQARRMQARCRSKSDKKTRLVHTLNGSGLAVGRTLVALMENYQQADGRIEIPEILRPYMRGLEYIG.

L-serine is bound at residue 237–239 (TAE). 268–270 (RSE) is an ATP binding site. Residue Glu291 participates in L-serine binding. ATP is bound at residue 355-358 (EISS). Ser391 serves as a coordination point for L-serine.

It belongs to the class-II aminoacyl-tRNA synthetase family. Type-1 seryl-tRNA synthetase subfamily. As to quaternary structure, homodimer. The tRNA molecule binds across the dimer.

The protein resides in the cytoplasm. It carries out the reaction tRNA(Ser) + L-serine + ATP = L-seryl-tRNA(Ser) + AMP + diphosphate + H(+). The enzyme catalyses tRNA(Sec) + L-serine + ATP = L-seryl-tRNA(Sec) + AMP + diphosphate + H(+). Its pathway is aminoacyl-tRNA biosynthesis; selenocysteinyl-tRNA(Sec) biosynthesis; L-seryl-tRNA(Sec) from L-serine and tRNA(Sec): step 1/1. Catalyzes the attachment of serine to tRNA(Ser). Is also able to aminoacylate tRNA(Sec) with serine, to form the misacylated tRNA L-seryl-tRNA(Sec), which will be further converted into selenocysteinyl-tRNA(Sec). This is Serine--tRNA ligase from Klebsiella pneumoniae (strain 342).